Here is a 292-residue protein sequence, read N- to C-terminus: General transcription factor IIE subunit 2 (292 aa).

Methionine 1 is modified (N-acetylmethionine). The interval 17 to 64 is disordered; it reads LSTPVVEKRAVPSESPSSSSSKKKKAKVEHGGSSGSKQNSDHNNGSFN. The span at 51 to 63 shows a compositional bias: polar residues; sequence GSKQNSDHNNGSF. Serine 62 bears the Phosphoserine mark. The TFIIE beta DNA-binding region spans 67 to 147; it reads ALSGSSGYKF…YAFKPKYNLK (81 aa). Lysine 75 bears the N6-acetyllysine mark. The segment at 245-277 is disordered; it reads SMQESGPKKVASIQRRKKPASQKKRRFKTHNEH. Residues 258-272 are compositionally biased toward basic residues; that stretch reads QRRKKPASQKKRRFK.

This sequence belongs to the TFIIE beta subunit family. As to quaternary structure, tetramer of two alpha and two beta chains. Interacts with FACT subunit SUPT16H. Interacts with ATF7IP. Interacts with SND1. Part of TBP-based Pol II pre-initiation complex (PIC), in which Pol II core assembles with general transcription factors and other specific initiation factors including GTF2E1, GTF2E2, GTF2F1, GTF2F2, TCEA1, ERCC2, ERCC3, GTF2H2, GTF2H3, GTF2H4, GTF2H5, GTF2A1, GTF2A2, GTF2B and TBP; this large multi-subunit PIC complex mediates DNA unwinding and targets Pol II core to the transcription start site where the first phosphodiester bond forms.

The protein resides in the nucleus. Its function is as follows. Recruits TFIIH to the initiation complex and stimulates the RNA polymerase II C-terminal domain kinase and DNA-dependent ATPase activities of TFIIH. Both TFIIH and TFIIE are required for promoter clearance by RNA polymerase. The chain is General transcription factor IIE subunit 2 (Gtf2e2) from Mus musculus (Mouse).